The following is a 398-amino-acid chain: CCA-adding enzyme (398 aa).

G32 and R35 together coordinate ATP. CTP-binding residues include G32 and R35. Mg(2+)-binding residues include D45 and D47. Residues R119, D162, R165, R168, and R171 each contribute to the ATP site. 5 residues coordinate CTP: R119, D162, R165, R168, and R171.

It belongs to the tRNA nucleotidyltransferase/poly(A) polymerase family. Bacterial CCA-adding enzyme type 3 subfamily. As to quaternary structure, homodimer. Requires Mg(2+) as cofactor.

It carries out the reaction a tRNA precursor + 2 CTP + ATP = a tRNA with a 3' CCA end + 3 diphosphate. The enzyme catalyses a tRNA with a 3' CCA end + 2 CTP + ATP = a tRNA with a 3' CCACCA end + 3 diphosphate. Catalyzes the addition and repair of the essential 3'-terminal CCA sequence in tRNAs without using a nucleic acid template. Adds these three nucleotides in the order of C, C, and A to the tRNA nucleotide-73, using CTP and ATP as substrates and producing inorganic pyrophosphate. tRNA 3'-terminal CCA addition is required both for tRNA processing and repair. Also involved in tRNA surveillance by mediating tandem CCA addition to generate a CCACCA at the 3' terminus of unstable tRNAs. While stable tRNAs receive only 3'-terminal CCA, unstable tRNAs are marked with CCACCA and rapidly degraded. The sequence is that of CCA-adding enzyme from Lactococcus lactis subsp. lactis (strain IL1403) (Streptococcus lactis).